The following is a 143-amino-acid chain: Calcitonin (143 aa).

An N-terminal signal peptide occupies residues 1–25 (MGFGKSSPFLAFSILVLCQAGSLQA). Residues 26 to 84 (TPLRSALETLPDPGALSEKEGRLLLAALVKAYVQRKTNELEQEEEQEETEDSSLDSSRA) constitute a propeptide that is removed on maturation. The residue at position 42 (serine 42) is a Phosphoserine. Residues 62-86 (TNELEQEEEQEETEDSSLDSSRAKR) form a disordered region. A compositionally biased stretch (acidic residues) spans 65–78 (LEQEEEQEETEDSS). Cysteine 87 and cysteine 93 are disulfide-bonded. The interval 112-143 (GFGPETPGKKRDIANSLEKDLSSHFGVPTDAN) is disordered. Proline amide is present on proline 118. Over residues 118–133 (PGKKRDIANSLEKDLS) the composition is skewed to basic and acidic residues. Positions 122-143 (RDIANSLEKDLSSHFGVPTDAN) are excised as a propeptide.

Belongs to the calcitonin family.

It localises to the secreted. In terms of biological role, calcitonin is a peptide hormone that causes a rapid but short-lived drop in the level of calcium and phosphate in blood by promoting the incorporation of those ions in the bones. Calcitonin function is mediated by the calcitonin receptor/CALCR and the CALCR-RAMP2 (AMYR2) receptor complex. This is Calcitonin (CALCA) from Ovis aries (Sheep).